We begin with the raw amino-acid sequence, 736 residues long: Catalase-peroxidase 2 (736 aa).

A cross-link (tryptophyl-tyrosyl-methioninium (Trp-Tyr) (with M-253)) is located at residues 91-227; sequence WHSAGTYRMG…LAAVQMGLIY (137 aa). His92 functions as the Proton acceptor in the catalytic mechanism. Positions 227–253 form a cross-link, tryptophyl-tyrosyl-methioninium (Tyr-Met) (with W-91); the sequence is YVNPEGPDGNPDPVAAAYDIREVFGRM. His268 is a heme b binding site.

This sequence belongs to the peroxidase family. Peroxidase/catalase subfamily. As to quaternary structure, homodimer or homotetramer. Requires heme b as cofactor. Formation of the three residue Trp-Tyr-Met cross-link is important for the catalase, but not the peroxidase activity of the enzyme.

It catalyses the reaction H2O2 + AH2 = A + 2 H2O. It carries out the reaction 2 H2O2 = O2 + 2 H2O. Bifunctional enzyme with both catalase and broad-spectrum peroxidase activity. Shows peroxidase specificity towards odianisidine, ABTS and pyrogallol, but methoxyphenol and 2-chloronaphthol are not peroxidized. This chain is Catalase-peroxidase 2, found in Burkholderia cenocepacia (strain ATCC BAA-245 / DSM 16553 / LMG 16656 / NCTC 13227 / J2315 / CF5610) (Burkholderia cepacia (strain J2315)).